Reading from the N-terminus, the 239-residue chain is Putative antitoxin VapB45 (239 aa).

Its function is as follows. Possibly the antitoxin component of a type II toxin-antitoxin (TA) system. Its cognate toxin is VapC45. The protein is Putative antitoxin VapB45 of Mycobacterium tuberculosis (strain ATCC 25618 / H37Rv).